A 145-amino-acid polypeptide reads, in one-letter code: AP-2 complex subunit sigma (145 aa).

It belongs to the adaptor complexes small subunit family. In terms of assembly, adaptor protein complex 2 (AP-2) is a heterotetramer composed of two large adaptins (alpha-type subunit apl3 and beta-type subunit apl1), a medium chain (mu-type subunit apm4) and a small adaptin (sigma-type subunit aps2).

It is found in the cell membrane. It localises to the membrane. The protein localises to the coated pit. Component of the adaptor complexes which link clathrin to receptors in coated vesicles. Clathrin-associated protein complexes are believed to interact with the cytoplasmic tails of membrane proteins, leading to their selection and concentration. The sequence is that of AP-2 complex subunit sigma (aps2) from Aspergillus fumigatus (strain ATCC MYA-4609 / CBS 101355 / FGSC A1100 / Af293) (Neosartorya fumigata).